A 233-amino-acid chain; its full sequence is B-cell lymphoma/leukemia 10 (233 aa).

Methionine 1 bears the N-acetylmethionine mark. Residues 13 to 101 (LTEVKKDALE…QSFLIQKITD (89 aa)) form the CARD domain. Residues lysine 17, lysine 31, and lysine 63 each participate in a glycyl lysine isopeptide (Lys-Gly) (interchain with G-Cter in ubiquitin) cross-link. The residue at position 138 (serine 138) is a Phosphoserine. A disordered region spans residues 185–233 (SSFSSATLPRPGDPGAPPLPPDLRLEEGGSCGNSSEMFLPLRSRALSRQ). Positions 195-205 (PGDPGAPPLPP) are enriched in pro residues.

Homomultimer; homooligomerized following recruitment by CARD domain-containing proteins that form a nucleating helical template that recruits BCL10 via CARD-CARD interaction. Self-associates by CARD-CARD interaction and interacts with other CARD-proteins such as CARD9, CARD10, CARD11 and CARD14. Forms a complex with CARD14 and MALT1; resulting in the formation of a CBM (CARD14-BCL10-MALT1) complex. Forms a complex with CARD11 and MALT1; resulting in the formation of a CBM (CARD11-BCL10-MALT1) complex. Forms a complex with CARD9 and MALT1; resulting in the formation of a CBM (CARD9-BCL10-MALT1) complex. Found in a membrane raft complex, at least composed of BCL10, CARD11, DPP4 and IKBKB. Binds caspase-9 with its C-terminal domain. Interacts with TRAF2 and BIRC2/c-IAP2. Interacts with PELI2 and SOCS3; these interactions may be mutually exclusive. Post-translationally, phosphorylated by IKBKB/IKKB. In terms of processing, ubiquitinated via both 'Lys-63'-linked and linear ('Met-1'-linked) polyubiquitin chains in response to T-cell receptor (TCR) activation. Ubiquitination is recognized by IKBKG/NEMO, the regulatory subunit of I-kappa-B kinase (IKK), and is required for TCR-induced NF-kappa-B activation. Linear ubiquitination at Lys-17, Lys-31 and Lys-63 is mediated by RNF31/HOIP; linear ubiquitination is recognized with much higher affinity than 'Lys-63'-linked ubiquitin by IKBKG/NEMO. CARD11 is required for linear ubiquitination by HOIP by promoting the targeting of BCL10 to RNF31/HOIP. Proteolytically cleaved by MALT1; required for T-cell activation. As to expression, highly expressed in heart, brain, spleen, lung, liver, skeletal muscle, kidney and testis. Detected in developing brain, olfactory epithelium, tongue, whisker follicles, salivary gland, heart, lung, liver and intestinal epithelia of stage 15 embryos.

The protein resides in the cytoplasm. It localises to the membrane raft. In terms of biological role, plays a key role in both adaptive and innate immune signaling by bridging CARD domain-containing proteins to immune activation. Acts by channeling adaptive and innate immune signaling downstream of CARD domain-containing proteins CARD9, CARD11 and CARD14 to activate NF-kappa-B and MAP kinase p38 (MAPK11, MAPK12, MAPK13 and/or MAPK14) pathways which stimulate expression of genes encoding pro-inflammatory cytokines and chemokines. Recruited by activated CARD domain-containing proteins: homooligomerized CARD domain-containing proteins form a nucleating helical template that recruits BCL10 via CARD-CARD interaction, thereby promoting polymerization of BCL10, subsequent recruitment of MALT1 and formation of a CBM complex. This leads to activation of NF-kappa-B and MAP kinase p38 (MAPK11, MAPK12, MAPK13 and/or MAPK14) pathways which stimulate expression of genes encoding pro-inflammatory cytokines and chemokines. Activated by CARD9 downstream of C-type lectin receptors; CARD9-mediated signals are essential for antifungal immunity. Activated by CARD11 downstream of T-cell receptor (TCR) and B-cell receptor (BCR). Promotes apoptosis, pro-caspase-9 maturation and activation of NF-kappa-B via NIK and IKK. In Mus musculus (Mouse), this protein is B-cell lymphoma/leukemia 10 (Bcl10).